The following is a 222-amino-acid chain: Sigma non-opioid intracellular receptor 1 (222 aa).

Topologically, residues 1-6 (MSLIRT) are lumenal. A helical transmembrane segment spans residues 7 to 29 (ILKLVVVVGFLSLTVQFIRHWMA). At 30–222 (NKQYVFTKEE…STFLTESGVL (193 aa)) the chain is on the cytoplasmic side. An important for ligand-binding region spans residues 97 to 104 (SLTEYVLL). The C-terminal hydrophobic region stretch occupies residues 175 to 222 (FIPSTLGFALADTMFSTQDFLTLFYTARVYVKGMILEASTFLTESGVL).

This sequence belongs to the ERG2 family. As to quaternary structure, homotrimer.

The protein resides in the nucleus inner membrane. Its subcellular location is the nucleus outer membrane. It is found in the nucleus envelope. The protein localises to the cytoplasmic vesicle. It localises to the endoplasmic reticulum membrane. The protein resides in the membrane. May function in lipid transport from the endoplasmic reticulum and be involved in a wide array of cellular functions probably through regulation of the biogenesis of lipid microdomains at the plasma membrane. May regulate calcium efflux at the endoplasmic reticulum. The sequence is that of Sigma non-opioid intracellular receptor 1 (sigmar1) from Danio rerio (Zebrafish).